A 302-amino-acid chain; its full sequence is MAAINTKVKKAVIPVAGLGTRMLPATKAIPKEMLPLVDKPLIQYVVNECIAAGITEIVLVTHSSKNSIENHFDTSFELEAMLEKRVKRQLLDEVQSICPPHVTIMQVRQGLAKGLGHAVLCAHPVVGDEPVAVILPDVILDEYESDLSQDNLAEMIRRFDETGHSQIMVEPVADVTAYGVVDCKGVELAPGESVPMVGVVEKPKADVAPSNLAIVGRYVLSADIWPLLAKTPPGAGDEIQLTDAIDMLIEKETVEAYHMKGKSHDCGNKLGYMQAFVEYGIRHNTLGTEFKAWLEEEMGIKK.

This sequence belongs to the UDPGP type 2 family. In terms of assembly, homotetramer or homopentamer. Requires Mg(2+) as cofactor.

The enzyme catalyses alpha-D-glucose 1-phosphate + UTP + H(+) = UDP-alpha-D-glucose + diphosphate. Functionally, may play a role in stationary phase survival. In Escherichia coli O157:H7, this protein is UTP--glucose-1-phosphate uridylyltransferase (galU).